A 79-amino-acid chain; its full sequence is UPF0150 protein ssr1765 (79 aa).

The protein belongs to the UPF0150 family.

This is UPF0150 protein ssr1765 from Synechocystis sp. (strain ATCC 27184 / PCC 6803 / Kazusa).